The primary structure comprises 273 residues: ATP synthase subunit a (273 aa).

7 consecutive transmembrane segments (helical) span residues 34–54, 94–114, 115–135, 143–163, 171–191, 218–238, and 244–264; these read IINM…CLFM, FIAP…SLDF, LPVD…LITH, DLNG…FYNI, FVHE…NLLL, FLLI…GHVV, and AIFH…LTLV.

This sequence belongs to the ATPase A chain family. F-type ATPases have 2 components, CF(1) - the catalytic core - and CF(0) - the membrane proton channel. CF(1) has five subunits: alpha(3), beta(3), gamma(1), delta(1), epsilon(1). CF(0) has three main subunits: a(1), b(2) and c(9-12). The alpha and beta chains form an alternating ring which encloses part of the gamma chain. CF(1) is attached to CF(0) by a central stalk formed by the gamma and epsilon chains, while a peripheral stalk is formed by the delta and b chains.

Its subcellular location is the cell inner membrane. Its function is as follows. Key component of the proton channel; it plays a direct role in the translocation of protons across the membrane. The polypeptide is ATP synthase subunit a (Janthinobacterium sp. (strain Marseille) (Minibacterium massiliensis)).